The sequence spans 145 residues: Cytochrome b (145 aa).

Residues 38 to 58 (FFALHFLLPFVLAALALMHLI) form a helical membrane-spanning segment. The heme b site is built by histidine 42 and histidine 56. Histidine 61 is a binding site for a ubiquinone. A helical transmembrane segment spans residues 85-105 (FIFKDLVTIFIFFIVLSIFVF).

It belongs to the cytochrome b family. As to quaternary structure, fungal cytochrome b-c1 complex contains 10 subunits; 3 respiratory subunits, 2 core proteins and 5 low-molecular weight proteins. Cytochrome b-c1 complex is a homodimer. It depends on heme b as a cofactor.

It is found in the mitochondrion inner membrane. Its function is as follows. Component of the ubiquinol-cytochrome c reductase complex (complex III or cytochrome b-c1 complex) that is part of the mitochondrial respiratory chain. The b-c1 complex mediates electron transfer from ubiquinol to cytochrome c. Contributes to the generation of a proton gradient across the mitochondrial membrane that is then used for ATP synthesis. The sequence is that of Cytochrome b (cob) from Aspergillus flavus.